A 264-amino-acid chain; its full sequence is 5'-nucleotidase SurE (264 aa).

A divalent metal cation-binding residues include Asp10, Asp11, Ser43, and Asn97.

This sequence belongs to the SurE nucleotidase family. A divalent metal cation is required as a cofactor.

It localises to the cytoplasm. It catalyses the reaction a ribonucleoside 5'-phosphate + H2O = a ribonucleoside + phosphate. Nucleotidase that shows phosphatase activity on nucleoside 5'-monophosphates. The protein is 5'-nucleotidase SurE of Sulfurimonas denitrificans (strain ATCC 33889 / DSM 1251) (Thiomicrospira denitrificans (strain ATCC 33889 / DSM 1251)).